A 379-amino-acid chain; its full sequence is Putative F-box protein At5g62660 (379 aa).

One can recognise an F-box domain in the interval alanine 35–valine 84.

The polypeptide is Putative F-box protein At5g62660 (Arabidopsis thaliana (Mouse-ear cress)).